Consider the following 323-residue polypeptide: L-lactate dehydrogenase (323 aa).

Residues V18, D39, Y69, and 83-84 (GA) contribute to the NAD(+) site. 2 residues coordinate substrate: Q86 and R92. NAD(+) is bound by residues S105, 122 to 124 (VAN), and S147. Residue 124 to 127 (NPVD) coordinates substrate. Residue 152 to 155 (DTGR) participates in substrate binding. Catalysis depends on H179, which acts as the Proton acceptor. The residue at position 223 (Y223) is a Phosphotyrosine. Position 232 (T232) interacts with substrate.

The protein belongs to the LDH/MDH superfamily. LDH family. Homotetramer.

The protein resides in the cytoplasm. It catalyses the reaction (S)-lactate + NAD(+) = pyruvate + NADH + H(+). It participates in fermentation; pyruvate fermentation to lactate; (S)-lactate from pyruvate: step 1/1. Under neutral conditions, the reaction is stimulated 4-fold by fructose 1,6-bisphosphate (FBP), however the L-lactate dehydrogenase is a nonallosteric enzyme. Calcium and zinc ions at 1 mM stimulate the activity almost 2-fold. Weakly inhibited by cadmium, cobalt and copper ions. In terms of biological role, catalyzes the conversion of lactate to pyruvate. This chain is L-lactate dehydrogenase, found in Lactobacillus helveticus (Lactobacillus suntoryeus).